A 396-amino-acid polypeptide reads, in one-letter code: Na(+)/H(+) antiporter NhaA 1 (396 aa).

12 helical membrane-spanning segments follow: residues 9–29 (LHNEAASGVLIFLAAVAAMLI), 59–79 (LLLWINDGLMAVFFLLVGLEL), 95–115 (VLPVVGAVGGIVGPALIYVMF), 125–145 (GWAVPTATDIAFAMGVLALLG), 154–174 (LFLLTLAIIDDLVAIVIIAIF), 177–197 (SDLSVGSLTVAGGAIALLFLL), 200–220 (IGVKGIAPYVLVGMVLWVAVL), 223–243 (GVHATLAGVVLAMAIPIKGET), 260–280 (VVGLVILPLFAFANAGVSLAG), 281–301 (LGLNVLLEPVAMGIGLGLLLG), 332–352 (GVALLCGIGFTMSLFISSLAF), and 373–393 (ILSGSLVSGVLGYLVLRFSLA).

The protein belongs to the NhaA Na(+)/H(+) (TC 2.A.33) antiporter family.

It localises to the cell inner membrane. It catalyses the reaction Na(+)(in) + 2 H(+)(out) = Na(+)(out) + 2 H(+)(in). Its function is as follows. Na(+)/H(+) antiporter that extrudes sodium in exchange for external protons. The polypeptide is Na(+)/H(+) antiporter NhaA 1 (Magnetococcus marinus (strain ATCC BAA-1437 / JCM 17883 / MC-1)).